Here is a 1649-residue protein sequence, read N- to C-terminus: DNA-directed RNA polymerase subunit beta' (1649 aa).

Zn(2+)-binding residues include cysteine 63, cysteine 65, cysteine 78, and cysteine 81. Aspartate 747, aspartate 749, and aspartate 751 together coordinate Mg(2+). 4 residues coordinate Zn(2+): cysteine 1078, cysteine 1269, cysteine 1276, and cysteine 1279.

It belongs to the RNA polymerase beta' chain family. The RNAP catalytic core consists of 2 alpha, 1 beta, 1 beta' and 1 omega subunit. When a sigma factor is associated with the core the holoenzyme is formed, which can initiate transcription. It depends on Mg(2+) as a cofactor. The cofactor is Zn(2+).

The catalysed reaction is RNA(n) + a ribonucleoside 5'-triphosphate = RNA(n+1) + diphosphate. Functionally, DNA-dependent RNA polymerase catalyzes the transcription of DNA into RNA using the four ribonucleoside triphosphates as substrates. In Thermosipho melanesiensis (strain DSM 12029 / CIP 104789 / BI429), this protein is DNA-directed RNA polymerase subunit beta'.